A 343-amino-acid chain; its full sequence is Glucan endo-1,3-beta-glucosidase, acidic isoform GI9 (343 aa).

The first 29 residues, 1–29 (MTLCIKNGFLAAALVLVGLLICSIQMIGA), serve as a signal peptide directing secretion. Pyrrolidone carboxylic acid is present on glutamine 30. Glutamate 124 acts as the Proton donor in catalysis. Glutamate 264 acts as the Nucleophile in catalysis.

The protein belongs to the glycosyl hydrolase 17 family.

Its subcellular location is the secreted. The protein resides in the extracellular space. The catalysed reaction is Hydrolysis of (1-&gt;3)-beta-D-glucosidic linkages in (1-&gt;3)-beta-D-glucans.. Functionally, implicated in the defense of plants against pathogens. The sequence is that of Glucan endo-1,3-beta-glucosidase, acidic isoform GI9 (PR2) from Nicotiana tabacum (Common tobacco).